The primary structure comprises 314 residues: Homoserine O-succinyltransferase (314 aa).

Cys-142 serves as the catalytic Acyl-thioester intermediate. Substrate contacts are provided by Lys-163 and Ser-192. Catalysis depends on His-235, which acts as the Proton acceptor. The active site involves Glu-237. A substrate-binding site is contributed by Arg-249.

The protein belongs to the MetA family.

Its subcellular location is the cytoplasm. The catalysed reaction is L-homoserine + succinyl-CoA = O-succinyl-L-homoserine + CoA. It participates in amino-acid biosynthesis; L-methionine biosynthesis via de novo pathway; O-succinyl-L-homoserine from L-homoserine: step 1/1. In terms of biological role, transfers a succinyl group from succinyl-CoA to L-homoserine, forming succinyl-L-homoserine. In Shewanella frigidimarina (strain NCIMB 400), this protein is Homoserine O-succinyltransferase.